A 176-amino-acid chain; its full sequence is Pro-glucagon (176 aa).

An N-terminal signal peptide occupies residues 1–20 (MKSLYFVAGLLVMLAQGSWQ). A compositionally biased stretch (polar residues) spans 25 to 35 (NTEEKSSSFPA). A disordered region spans residues 25-59 (NTEEKSSSFPAPQTDPLGDPDQISEDKRHSQGTFT). S54 bears the Phosphoserine mark. The propeptide occupies 84 to 89 (NKNNIA). A phosphoserine mark is found at S105 and S108. R127 is subject to Arginine amide. A propeptide spanning residues 131–145 (DFPEEVNIVEELRRR) is cleaved from the precursor. S150 and S152 each carry phosphoserine.

The protein belongs to the glucagon family. In terms of processing, proglucagon is post-translationally processed in a tissue-specific manner in pancreatic A cells and intestinal L cells. In pancreatic A cells, the major bioactive hormone is glucagon cleaved by PCSK2/PC2. In the intestinal L cells PCSK1/PC1 liberates GLP-1, GLP-2, glicentin and oxyntomodulin. GLP-1 is further N-terminally truncated by post-translational processing in the intestinal L cells resulting in GLP-1(7-37) GLP-1-(7-36)amide. The C-terminal amidation is neither important for the metabolism of GLP-1 nor for its effects on the endocrine pancreas. In terms of tissue distribution, glucagon is secreted in the A cells of the islets of Langerhans. GLP-1, GLP-2, oxyntomodulin and glicentin are secreted from enteroendocrine cells throughout the gastrointestinal tract. GLP-1 and GLP-2 are also secreted in selected neurons in the brain.

Its subcellular location is the secreted. In terms of biological role, plays a key role in glucose metabolism and homeostasis. Regulates blood glucose by increasing gluconeogenesis and decreasing glycolysis. A counterregulatory hormone of insulin, raises plasma glucose levels in response to insulin-induced hypoglycemia. Plays an important role in initiating and maintaining hyperglycemic conditions in diabetes. Potent stimulator of glucose-dependent insulin release. Also stimulates insulin release in response to IL6. Plays important roles on gastric motility and the suppression of plasma glucagon levels. May be involved in the suppression of satiety and stimulation of glucose disposal in peripheral tissues, independent of the actions of insulin. Has growth-promoting activities on intestinal epithelium. May also regulate the hypothalamic pituitary axis (HPA) via effects on LH, TSH, CRH, oxytocin, and vasopressin secretion. Increases islet mass through stimulation of islet neogenesis and pancreatic beta cell proliferation. Inhibits beta cell apoptosis. Its function is as follows. Stimulates intestinal growth and up-regulates villus height in the small intestine, concomitant with increased crypt cell proliferation and decreased enterocyte apoptosis. The gastrointestinal tract, from the stomach to the colon is the principal target for GLP-2 action. Plays a key role in nutrient homeostasis, enhancing nutrient assimilation through enhanced gastrointestinal function, as well as increasing nutrient disposal. Stimulates intestinal glucose transport and decreases mucosal permeability. Functionally, significantly reduces food intake. Inhibits gastric emptying in humans. Suppression of gastric emptying may lead to increased gastric distension, which may contribute to satiety by causing a sensation of fullness. In terms of biological role, may modulate gastric acid secretion and the gastro-pyloro-duodenal activity. May play an important role in intestinal mucosal growth in the early period of life. The chain is Pro-glucagon (GCG) from Ovis aries (Sheep).